Consider the following 471-residue polypeptide: ATP synthase subunit beta (471 aa).

Position 156–163 (156–163 (GGAGVGKT)) interacts with ATP.

It belongs to the ATPase alpha/beta chains family. F-type ATPases have 2 components, CF(1) - the catalytic core - and CF(0) - the membrane proton channel. CF(1) has five subunits: alpha(3), beta(3), gamma(1), delta(1), epsilon(1). CF(0) has three main subunits: a(1), b(2) and c(9-12). The alpha and beta chains form an alternating ring which encloses part of the gamma chain. CF(1) is attached to CF(0) by a central stalk formed by the gamma and epsilon chains, while a peripheral stalk is formed by the delta and b chains.

Its subcellular location is the cell membrane. It catalyses the reaction ATP + H2O + 4 H(+)(in) = ADP + phosphate + 5 H(+)(out). Functionally, produces ATP from ADP in the presence of a proton gradient across the membrane. The catalytic sites are hosted primarily by the beta subunits. The protein is ATP synthase subunit beta of Macrococcus caseolyticus (strain JCSC5402) (Macrococcoides caseolyticum).